The following is a 235-amino-acid chain: MLKLIDITWLYHHLPMRFTLAVERGEQVAILGPSGAGKSTLLNLIAGFLAPASGTLLIAGEDHTLTPPSRRPVSMLFQENNLFSHLNVQQNIGLGLNPGLTLNASQREKRDAIARQMGIESLMTRLPGELSGGQRQRVALARCLVREQPVLLLDEPFSALDPALRQEMLTLVSDICRERQLTLLMVSHSVEDAARIAPRSIVVADGRIAWQGKTDELLSGQASASALLGIKSHIL.

The region spanning Leu-2 to Ile-230 is the ABC transporter domain. Gly-32–Ser-39 lines the ATP pocket.

This sequence belongs to the ABC transporter superfamily. Thiamine importer (TC 3.A.1.19.1) family. In terms of assembly, the complex is composed of two ATP-binding proteins (ThiQ), two transmembrane proteins (ThiP) and a solute-binding protein (ThiB).

It localises to the cell inner membrane. The catalysed reaction is thiamine(out) + ATP + H2O = thiamine(in) + ADP + phosphate + H(+). Functionally, part of the ABC transporter complex ThiBPQ involved in thiamine import. Responsible for energy coupling to the transport system. The polypeptide is Thiamine import ATP-binding protein ThiQ (Salmonella paratyphi A (strain ATCC 9150 / SARB42)).